Reading from the N-terminus, the 186-residue chain is MSRLSIFPDETAANAPDGLVPQLESNDPAVIQASLSRRGIGFEQWPAEHGLPEGADQATILQAYADAIAWVQRDGGYFTVDAIRMTPNHPDREPLRRKFLEEHTHAEDEVRFFVEGCGLFVLHIGSEVLSVLCERGDLMRVPAGTRHWFDMGSQPRFCAVRWFNNPEGWVAQYTGSSISQRFPRLD.

Residues His-103, His-105, Glu-109, and His-147 each contribute to the Fe(2+) site. Ni(2+)-binding residues include His-103, His-105, Glu-109, and His-147.

The protein belongs to the acireductone dioxygenase (ARD) family. As to quaternary structure, monomer. Requires Fe(2+) as cofactor. Ni(2+) is required as a cofactor.

The catalysed reaction is 1,2-dihydroxy-5-(methylsulfanyl)pent-1-en-3-one + O2 = 3-(methylsulfanyl)propanoate + CO + formate + 2 H(+). It catalyses the reaction 1,2-dihydroxy-5-(methylsulfanyl)pent-1-en-3-one + O2 = 4-methylsulfanyl-2-oxobutanoate + formate + 2 H(+). It participates in amino-acid biosynthesis; L-methionine biosynthesis via salvage pathway; L-methionine from S-methyl-5-thio-alpha-D-ribose 1-phosphate: step 5/6. Catalyzes 2 different reactions between oxygen and the acireductone 1,2-dihydroxy-3-keto-5-methylthiopentene (DHK-MTPene) depending upon the metal bound in the active site. Fe-containing acireductone dioxygenase (Fe-ARD) produces formate and 2-keto-4-methylthiobutyrate (KMTB), the alpha-ketoacid precursor of methionine in the methionine recycle pathway. Ni-containing acireductone dioxygenase (Ni-ARD) produces methylthiopropionate, carbon monoxide and formate, and does not lie on the methionine recycle pathway. The protein is Acireductone dioxygenase of Synechococcus sp. (strain CC9605).